The following is a 149-amino-acid chain: MKSTEFHPVHYDAHGRLRLPLLFWLVLLLQARTWVLFVIAGASREQGTALLNLFYPDHDNFWLGLIPGIPAVLAFLLSGRRATFPRTWRVLYFLLLLAQVVLLCWQPWLWLNGESVSGIGLALVVADIVALIWLLTNRRLRACFYEVKE.

At 1 to 18 the chain is on the cytoplasmic side; sequence MKSTEFHPVHYDAHGRLR. Residues 19 to 39 traverse the membrane as a helical segment; sequence LPLLFWLVLLLQARTWVLFVI. Over 40–58 the chain is Periplasmic; sequence AGASREQGTALLNLFYPDH. Residues 59–79 traverse the membrane as a helical segment; the sequence is DNFWLGLIPGIPAVLAFLLSG. The Cytoplasmic portion of the chain corresponds to 80-89; that stretch reads RRATFPRTWR. Residues 90–110 traverse the membrane as a helical segment; the sequence is VLYFLLLLAQVVLLCWQPWLW. Over 111–115 the chain is Periplasmic; sequence LNGES. The helical transmembrane segment at 116–136 threads the bilayer; the sequence is VSGIGLALVVADIVALIWLLT. Over 137 to 149 the chain is Cytoplasmic; that stretch reads NRRLRACFYEVKE.

Its subcellular location is the cell inner membrane. The chain is Inner membrane protein YfeZ (yfeZ) from Escherichia coli (strain K12).